We begin with the raw amino-acid sequence, 372 residues long: Flap endonuclease 1 (372 aa).

Residues 1-105 (MGVKGLNQLI…GELEKRLLRR (105 aa)) are N-domain. Residue Asp-34 coordinates Mg(2+). 2 residues coordinate DNA: Arg-47 and Arg-71. Positions 87, 159, 161, 180, and 182 each coordinate Mg(2+). The segment at 123–254 (EVLKFEKRLV…ATAFKLIKEH (132 aa)) is I-domain. Glu-159 is a binding site for DNA. 2 residues coordinate DNA: Gly-232 and Asp-234. Asp-234 provides a ligand contact to Mg(2+). Residues 339-347 (VQGRLDGFF) form an interaction with PCNA region.

Belongs to the XPG/RAD2 endonuclease family. FEN1 subfamily. Interacts with PCNA. Three molecules of RAD27 bind to one PCNA trimer with each molecule binding to one PCNA monomer. PCNA stimulates the nuclease activity without altering cleavage specificity. It depends on Mg(2+) as a cofactor. Phosphorylated. Phosphorylation upon DNA damage induces relocalization to the nuclear plasma.

The protein resides in the nucleus. It localises to the nucleolus. Its subcellular location is the nucleoplasm. The protein localises to the mitochondrion. Functionally, structure-specific nuclease with 5'-flap endonuclease and 5'-3' exonuclease activities involved in DNA replication and repair. During DNA replication, cleaves the 5'-overhanging flap structure that is generated by displacement synthesis when DNA polymerase encounters the 5'-end of a downstream Okazaki fragment. It enters the flap from the 5'-end and then tracks to cleave the flap base, leaving a nick for ligation. Also involved in the long patch base excision repair (LP-BER) pathway, by cleaving within the apurinic/apyrimidinic (AP) site-terminated flap. Acts as a genome stabilization factor that prevents flaps from equilibrating into structures that lead to duplications and deletions. Also possesses 5'-3' exonuclease activity on nicked or gapped double-stranded DNA, and exhibits RNase H activity. Also involved in replication and repair of rDNA and in repairing mitochondrial DNA. The sequence is that of Flap endonuclease 1 from Candida dubliniensis (strain CD36 / ATCC MYA-646 / CBS 7987 / NCPF 3949 / NRRL Y-17841) (Yeast).